The sequence spans 199 residues: Large ribosomal subunit protein bL25 (199 aa).

This sequence belongs to the bacterial ribosomal protein bL25 family. CTC subfamily. In terms of assembly, part of the 50S ribosomal subunit; part of the 5S rRNA/L5/L18/L25 subcomplex. Contacts the 5S rRNA. Binds to the 5S rRNA independently of L5 and L18.

Functionally, this is one of the proteins that binds to the 5S RNA in the ribosome where it forms part of the central protuberance. The sequence is that of Large ribosomal subunit protein bL25 from Pseudomonas fluorescens (strain ATCC BAA-477 / NRRL B-23932 / Pf-5).